The chain runs to 634 residues: BTB/POZ domain-containing protein At1g03010 (634 aa).

The region spanning 38 to 103 (SDLTVQVGSS…CYGINIEINL (66 aa)) is the BTB domain. The NPH3 domain occupies 205-503 (DWWGKSLAVL…VQVLYFEQIR (299 aa)). The residue at position 444 (Y444) is a Phosphotyrosine. Residues 542–580 (RDNYASVRRENRELKLEVARMRMRLTDLEKDHISIKQEL) adopt a coiled-coil conformation.

This sequence belongs to the NPH3 family.

The protein operates within protein modification; protein ubiquitination. Its function is as follows. May act as a substrate-specific adapter of an E3 ubiquitin-protein ligase complex (CUL3-RBX1-BTB) which mediates the ubiquitination and subsequent proteasomal degradation of target proteins. This is BTB/POZ domain-containing protein At1g03010 from Arabidopsis thaliana (Mouse-ear cress).